Consider the following 810-residue polypeptide: MRISVNWLQSLVELNLSPEELGELLTIAGLEVEEIEDRRSWAAGVVLGRVISREKHPNADKLSVCVVDIGTEEPSTIVCGAANVRADILVPVATLGSYLPKVDLKIKPAKLRGVKSSGMICSLAELGLSKESEGIHIFPDLDLPSGSPVGPLLGLDDVILEISPTANRADALSMVGVAREVAALTGGKLSLPEIKAVSVSDQDLPISVTEPQACPTYVGTVIRGVKVGPSPDWLQQRLLAAGTRPINNVVDVTNYVLLEWGQPLHSFDQDKLQTLVGPEGFALGVRFAEEGEKLITLDDQERTLQPQNLLVTANDQPVAIAGVMGGAATEVDENTQNIVLETALFDGVTIRKSSKAINLRSESSTRYERGVNRCELEVALHRAIALMTELAGGTVVRQGKADQRQDRGEAIINLRLERLQQLLGKVNTPTGIGNITAEDVERILTDLGCGLTRQSDSDTPVWAVTVPSYRQRDIEREIDLIEEVARLYGYDHFCEQLPSNTIAGGLSPSYQAELALREACRGVGLTEVVHYSLVKPHGSEVMLANPLFAEYSALRTNLLDGLITAFANNQAQNNGALNAFEVGRVFWQNEGDIGEADHLAGICGGSQITEGTWPQGGKPQPMSWYDAKGLLEAIFQRLGATVTYSGDHQDPRLHPGRTALLSCNGTVLGRFGQLHPQLRREKGLIDEVYAFEITLTPLYQAMETQILGTPDFRPYSPYPAVARDLALYAPLELTVAELTQAMVKAGGDLLEQVELFDEYRGQSVPAGQRSLAFSLAYRVGDRTLTDADVEPLHNQIREALTKQFAVSLRS.

The tRNA-binding domain maps to 39-150 (RSWAAGVVLG…LDLPSGSPVG (112 aa)). The B5 domain maps to 407 to 495 (RGEAIINLRL…RLYGYDHFCE (89 aa)). Positions 473, 479, 482, and 483 each coordinate Mg(2+). Residues 716–809 (SPYPAVARDL…LTKQFAVSLR (94 aa)) enclose the FDX-ACB domain.

The protein belongs to the phenylalanyl-tRNA synthetase beta subunit family. Type 1 subfamily. As to quaternary structure, tetramer of two alpha and two beta subunits. Mg(2+) serves as cofactor.

Its subcellular location is the cytoplasm. It catalyses the reaction tRNA(Phe) + L-phenylalanine + ATP = L-phenylalanyl-tRNA(Phe) + AMP + diphosphate + H(+). This Synechocystis sp. (strain ATCC 27184 / PCC 6803 / Kazusa) protein is Phenylalanine--tRNA ligase beta subunit (pheT).